Here is a 237-residue protein sequence, read N- to C-terminus: Ribonuclease PH (237 aa).

Phosphate-binding positions include Arg86 and 124–126 (GTR).

This sequence belongs to the RNase PH family. In terms of assembly, homohexameric ring arranged as a trimer of dimers.

It carries out the reaction tRNA(n+1) + phosphate = tRNA(n) + a ribonucleoside 5'-diphosphate. In terms of biological role, phosphorolytic 3'-5' exoribonuclease that plays an important role in tRNA 3'-end maturation. Removes nucleotide residues following the 3'-CCA terminus of tRNAs; can also add nucleotides to the ends of RNA molecules by using nucleoside diphosphates as substrates, but this may not be physiologically important. Probably plays a role in initiation of 16S rRNA degradation (leading to ribosome degradation) during starvation. This is Ribonuclease PH from Bradyrhizobium sp. (strain BTAi1 / ATCC BAA-1182).